A 183-amino-acid polypeptide reads, in one-letter code: Translation initiation factor IF-3 (183 aa).

The protein belongs to the IF-3 family. Monomer.

It localises to the cytoplasm. Functionally, IF-3 binds to the 30S ribosomal subunit and shifts the equilibrium between 70S ribosomes and their 50S and 30S subunits in favor of the free subunits, thus enhancing the availability of 30S subunits on which protein synthesis initiation begins. The chain is Translation initiation factor IF-3 from Vibrio cholerae serotype O1 (strain ATCC 39315 / El Tor Inaba N16961).